The primary structure comprises 193 residues: MELGNQPGPGNRPEIELEWYQYVQNTVGWALASYGWYILFGCIILYFLIQKLSANFTRAGASTHTTVTDPDEIVRRQEAVTAARMRMQEELNAQAELYKQKQVQLQEEKRRRNIETWDRMQEGKSSKVACRLGQDASPSTSASSSPSTSSSAPKPKPERKPLRGSGYNPLTGDGGSTCAWRPGRRGPSSGGUG.

A helical transmembrane segment spans residues 29–49; it reads WALASYGWYILFGCIILYFLI. Residues 114-125 are compositionally biased toward basic and acidic residues; the sequence is IETWDRMQEGKS. The disordered stretch occupies residues 114–193; the sequence is IETWDRMQEG…RRGPSSGGUG (80 aa). Residues 137–153 show a composition bias toward low complexity; sequence SPSTSASSSPSTSSSAP. Residue U192 is a non-standard amino acid, selenocysteine.

Belongs to the selenoprotein S family.

The protein localises to the endoplasmic reticulum membrane. It localises to the cytoplasm. In terms of biological role, involved in the degradation process of misfolded endoplasmic reticulum (ER) luminal proteins. Participates in the transfer of misfolded proteins from the ER to the cytosol, where they are destroyed by the proteasome in a ubiquitin-dependent manner. This Xenopus laevis (African clawed frog) protein is Selenoprotein S A (vimp-a).